Here is a 255-residue protein sequence, read N- to C-terminus: 5-oxoprolinase subunit A (255 aa).

The protein belongs to the LamB/PxpA family. As to quaternary structure, forms a complex composed of PxpA, PxpB and PxpC.

The enzyme catalyses 5-oxo-L-proline + ATP + 2 H2O = L-glutamate + ADP + phosphate + H(+). Its function is as follows. Catalyzes the cleavage of 5-oxoproline to form L-glutamate coupled to the hydrolysis of ATP to ADP and inorganic phosphate. The chain is 5-oxoprolinase subunit A from Pyrococcus furiosus (strain ATCC 43587 / DSM 3638 / JCM 8422 / Vc1).